The following is a 475-amino-acid chain: Putative response regulator NtrX-like (475 aa).

The region spanning 5–121 is the Response regulatory domain; it reads DVLIVDDEES…KLVILLKRAC (117 aa). Position 54 is a 4-aspartylphosphate (aspartate 54). In terms of domain architecture, Sigma-54 factor interaction spans 143–369; the sequence is LVGGCSVTLK…LRNVVEWTLI (227 aa). Residues 171-178 and 232-241 each bind ATP; these read GKVGSGKE and ANNGTLYIDE.

Functionally, member of the two-component regulatory system RF_0895/RF_0427. The sequence is that of Putative response regulator NtrX-like from Rickettsia felis (strain ATCC VR-1525 / URRWXCal2) (Rickettsia azadi).